We begin with the raw amino-acid sequence, 298 residues long: Acetyl-coenzyme A carboxylase carboxyl transferase subunit beta (298 aa).

One can recognise a CoA carboxyltransferase N-terminal domain in the interval 25–295; that stretch reads VWAKCANCGE…SADHREHVVA (271 aa). Cys-29, Cys-32, Cys-48, and Cys-51 together coordinate Zn(2+). The C4-type zinc-finger motif lies at 29–51; that stretch reads CANCGELTYQKQFNDALKVCPKC.

Belongs to the AccD/PCCB family. Acetyl-CoA carboxylase is a heterohexamer composed of biotin carboxyl carrier protein (AccB), biotin carboxylase (AccC) and two subunits each of ACCase subunit alpha (AccA) and ACCase subunit beta (AccD). The cofactor is Zn(2+).

It is found in the cytoplasm. It catalyses the reaction N(6)-carboxybiotinyl-L-lysyl-[protein] + acetyl-CoA = N(6)-biotinyl-L-lysyl-[protein] + malonyl-CoA. Its pathway is lipid metabolism; malonyl-CoA biosynthesis; malonyl-CoA from acetyl-CoA: step 1/1. Its function is as follows. Component of the acetyl coenzyme A carboxylase (ACC) complex. Biotin carboxylase (BC) catalyzes the carboxylation of biotin on its carrier protein (BCCP) and then the CO(2) group is transferred by the transcarboxylase to acetyl-CoA to form malonyl-CoA. In Herpetosiphon aurantiacus (strain ATCC 23779 / DSM 785 / 114-95), this protein is Acetyl-coenzyme A carboxylase carboxyl transferase subunit beta.